The following is a 98-amino-acid chain: NADH-ubiquinone oxidoreductase chain 4L (98 aa).

3 consecutive transmembrane segments (helical) span residues 1-21 (MPII…GMLT), 29-49 (SLLC…LMAL), and 58-78 (IVPI…LSLL).

It belongs to the complex I subunit 4L family. In terms of assembly, core subunit of respiratory chain NADH dehydrogenase (Complex I) which is composed of 45 different subunits.

It localises to the mitochondrion inner membrane. The catalysed reaction is a ubiquinone + NADH + 5 H(+)(in) = a ubiquinol + NAD(+) + 4 H(+)(out). Its function is as follows. Core subunit of the mitochondrial membrane respiratory chain NADH dehydrogenase (Complex I) which catalyzes electron transfer from NADH through the respiratory chain, using ubiquinone as an electron acceptor. Part of the enzyme membrane arm which is embedded in the lipid bilayer and involved in proton translocation. The protein is NADH-ubiquinone oxidoreductase chain 4L (MT-ND4L) of Presbytis melalophos (Mitred leaf monkey).